We begin with the raw amino-acid sequence, 348 residues long: EGF-like domain containing protein 1 (348 aa).

Positions Met1–Cys19 are cleaved as a signal peptide. In terms of domain architecture, EGF-like spans Thr60–Glu92. Intrachain disulfides connect Cys64–Cys74, Cys68–Cys80, and Cys82–Cys91. One can recognise a ZP domain in the interval Arg99–Gln342.

Prismatic layer of shell (at protein level). Expressed primarily in the mantle with highest level in the mantle edge and lower level in the mantle pallium.

It is found in the secreted. The chain is EGF-like domain containing protein 1 from Margaritifera margaritifera (Freshwater pearl mussel).